The following is a 347-amino-acid chain: Spermidine/putrescine import ATP-binding protein PotA (347 aa).

In terms of domain architecture, ABC transporter spans 6–238 (LEIKNLSHYY…PKTKFVADFI (233 aa)). An ATP-binding site is contributed by 40–47 (GPSGCGKT).

The protein belongs to the ABC transporter superfamily. Spermidine/putrescine importer (TC 3.A.1.11.1) family. The complex is composed of two ATP-binding proteins (PotA), two transmembrane proteins (PotB and PotC) and a solute-binding protein (PotD).

The protein resides in the cell inner membrane. The enzyme catalyses ATP + H2O + polyamine-[polyamine-binding protein]Side 1 = ADP + phosphate + polyamineSide 2 + [polyamine-binding protein]Side 1.. Its function is as follows. Part of the ABC transporter complex PotABCD involved in spermidine/putrescine import. Responsible for energy coupling to the transport system. This is Spermidine/putrescine import ATP-binding protein PotA from Borreliella afzelii (strain PKo) (Borrelia afzelii).